The primary structure comprises 381 residues: Sulfite reductase, dissimilatory-type subunit beta (381 aa).

The [4Fe-4S] cluster site is built by cysteine 151, cysteine 188, cysteine 189, cysteine 193, cysteine 231, cysteine 258, cysteine 261, and cysteine 264. Cysteine 193 contributes to the siroheme binding site. Residues 249–276 (NTIAIKNERCMYCGNCYTMCPALPISDG) enclose the 4Fe-4S ferredoxin-type domain.

In terms of assembly, heterohexamer of two alpha, two beta and two gamma subunits. It depends on [4Fe-4S] cluster as a cofactor. The cofactor is siroheme.

It catalyses the reaction [DsrC protein]-trisulfide + NAD(+) + 3 H2O = [DsrC protein]-dithiol + sulfite + NADH + 3 H(+). Catalyzes the reduction of sulfite to sulfide. This is the terminal oxidation reaction in sulfate respiration, a process catalyzed by the sulfate-reducing bacteria. The chain is Sulfite reductase, dissimilatory-type subunit beta (dsvB) from Nitratidesulfovibrio vulgaris (strain ATCC 29579 / DSM 644 / CCUG 34227 / NCIMB 8303 / VKM B-1760 / Hildenborough) (Desulfovibrio vulgaris).